Consider the following 298-residue polypeptide: Aspartate carbamoyltransferase catalytic subunit (298 aa).

Carbamoyl phosphate contacts are provided by arginine 54 and threonine 55. Lysine 82 provides a ligand contact to L-aspartate. Carbamoyl phosphate-binding residues include arginine 104, histidine 132, and glutamine 135. L-aspartate is bound by residues arginine 165 and arginine 218. The carbamoyl phosphate site is built by glycine 260 and proline 261.

This sequence belongs to the aspartate/ornithine carbamoyltransferase superfamily. ATCase family. In terms of assembly, heterododecamer (2C3:3R2) of six catalytic PyrB chains organized as two trimers (C3), and six regulatory PyrI chains organized as three dimers (R2).

The enzyme catalyses carbamoyl phosphate + L-aspartate = N-carbamoyl-L-aspartate + phosphate + H(+). It functions in the pathway pyrimidine metabolism; UMP biosynthesis via de novo pathway; (S)-dihydroorotate from bicarbonate: step 2/3. Catalyzes the condensation of carbamoyl phosphate and aspartate to form carbamoyl aspartate and inorganic phosphate, the committed step in the de novo pyrimidine nucleotide biosynthesis pathway. This is Aspartate carbamoyltransferase catalytic subunit from Wolbachia sp. subsp. Brugia malayi (strain TRS).